The following is a 282-amino-acid chain: Putative hydrolase BceJ2315_61450 (282 aa).

Positions 124, 126, and 155 each coordinate Mg(2+).

The protein belongs to the FAH family. Mg(2+) is required as a cofactor.

This Burkholderia cenocepacia (strain ATCC BAA-245 / DSM 16553 / LMG 16656 / NCTC 13227 / J2315 / CF5610) (Burkholderia cepacia (strain J2315)) protein is Putative hydrolase BceJ2315_61450.